Reading from the N-terminus, the 274-residue chain is WIMGHMVNAIEQVDEFLNLGANAIEFDIDFDKDGIAQITHHGIPCDCGRKCTKKAIFTEYLDNIRQVTTPDDPKFREQLVLLALDLKLQRISSAKAYRAGEDVAKKLLDHYWQRGNSRARAYILLNIPSVEDYEFIRAFKDTLKNEGYESYNDKVGINFTGNEDLDKIRDVLEILGIHKQVWQADGITSCFARGTERLKEALEKRDTPGYNYINKVYAWTLVRKSIMRRSLRLGVDGVMSNNPDRVIKVLKEKEFADKFRLATYNDNPWEKFRG.

The active site involves His-5. Residues Glu-25 and Asp-27 each contribute to the Mg(2+) site. The Nucleophile role is filled by His-41. 2 disulfide bridges follow: Cys-45/Cys-51 and Cys-47/Cys-190. Mg(2+) is bound at residue Asp-85.

It belongs to the arthropod phospholipase D family. Class II subfamily. Mg(2+) serves as cofactor. Expressed by the venom gland.

It is found in the secreted. The catalysed reaction is an N-(acyl)-sphingosylphosphocholine = an N-(acyl)-sphingosyl-1,3-cyclic phosphate + choline. It carries out the reaction an N-(acyl)-sphingosylphosphoethanolamine = an N-(acyl)-sphingosyl-1,3-cyclic phosphate + ethanolamine. The enzyme catalyses a 1-acyl-sn-glycero-3-phosphocholine = a 1-acyl-sn-glycero-2,3-cyclic phosphate + choline. It catalyses the reaction a 1-acyl-sn-glycero-3-phosphoethanolamine = a 1-acyl-sn-glycero-2,3-cyclic phosphate + ethanolamine. Dermonecrotic toxins cleave the phosphodiester linkage between the phosphate and headgroup of certain phospholipids (sphingolipid and lysolipid substrates), forming an alcohol (often choline) and a cyclic phosphate. This toxin acts on sphingomyelin (SM). It may also act on ceramide phosphoethanolamine (CPE), lysophosphatidylcholine (LPC) and lysophosphatidylethanolamine (LPE), but not on lysophosphatidylserine (LPS), and lysophosphatidylglycerol (LPG). It acts by transphosphatidylation, releasing exclusively cyclic phosphate products as second products. Induces dermonecrosis, hemolysis, increased vascular permeability, edema, inflammatory response, and platelet aggregation. The protein is Dermonecrotic toxin SdSicTox-betaIIB1bii of Sicarius cf. damarensis (strain GJB-2008) (Six-eyed sand spider).